The primary structure comprises 216 residues: Pyridoxine/pyridoxamine 5'-phosphate oxidase (216 aa).

FMN-binding positions include 63-68 (RMVLMK), 78-79 (YS), K85, and Q107. Residue K68 coordinates substrate. Substrate is bound by residues Y125 and R129. FMN contacts are provided by residues 142–143 (QS) and W187. 193 to 195 (RLH) provides a ligand contact to substrate. FMN is bound at residue R197.

The protein belongs to the pyridoxamine 5'-phosphate oxidase family. Homodimer. FMN serves as cofactor.

It catalyses the reaction pyridoxamine 5'-phosphate + O2 + H2O = pyridoxal 5'-phosphate + H2O2 + NH4(+). The enzyme catalyses pyridoxine 5'-phosphate + O2 = pyridoxal 5'-phosphate + H2O2. It participates in cofactor metabolism; pyridoxal 5'-phosphate salvage; pyridoxal 5'-phosphate from pyridoxamine 5'-phosphate: step 1/1. The protein operates within cofactor metabolism; pyridoxal 5'-phosphate salvage; pyridoxal 5'-phosphate from pyridoxine 5'-phosphate: step 1/1. Functionally, catalyzes the oxidation of either pyridoxine 5'-phosphate (PNP) or pyridoxamine 5'-phosphate (PMP) into pyridoxal 5'-phosphate (PLP). The protein is Pyridoxine/pyridoxamine 5'-phosphate oxidase of Bradyrhizobium sp. (strain ORS 278).